The sequence spans 198 residues: dCTP deaminase (198 aa).

Residues 110–115 (RSSLAR), Asp128, 136–138 (VLE), Tyr171, Lys178, and Gln182 each bind dCTP. The active-site Proton donor/acceptor is Glu138. The interval 168–198 (ARPYNKREDAKYRDQKGAVASRISQDEKVNK) is disordered. A compositionally biased stretch (basic and acidic residues) spans 172–183 (NKREDAKYRDQK).

The protein belongs to the dCTP deaminase family. In terms of assembly, homotrimer.

It carries out the reaction dCTP + H2O + H(+) = dUTP + NH4(+). It functions in the pathway pyrimidine metabolism; dUMP biosynthesis; dUMP from dCTP (dUTP route): step 1/2. Functionally, catalyzes the deamination of dCTP to dUTP. The chain is dCTP deaminase from Colwellia psychrerythraea (strain 34H / ATCC BAA-681) (Vibrio psychroerythus).